A 127-amino-acid polypeptide reads, in one-letter code: Apolipoprotein C-IV (127 aa).

The signal sequence occupies residues 1 to 27; the sequence is MSLLRNRLQDLPALCLCVLVLACIGAC.

The protein belongs to the apolipoprotein C4 family.

The protein resides in the secreted. Functionally, may participate in lipoprotein metabolism. The polypeptide is Apolipoprotein C-IV (APOC4) (Chlorocebus sabaeus (Green monkey)).